A 235-amino-acid chain; its full sequence is Purine nucleoside phosphorylase DeoD-type (235 aa).

H4 provides a ligand contact to a purine D-ribonucleoside. Residues G20, R24, R43, and 87-90 each bind phosphate; that span reads RVGT. A purine D-ribonucleoside is bound by residues E162, 179-181, and 203-204; these read EME and SD. Catalysis depends on D204, which acts as the Proton donor.

Belongs to the PNP/UDP phosphorylase family. In terms of assembly, homohexamer; trimer of homodimers.

The catalysed reaction is a purine D-ribonucleoside + phosphate = a purine nucleobase + alpha-D-ribose 1-phosphate. It carries out the reaction a purine 2'-deoxy-D-ribonucleoside + phosphate = a purine nucleobase + 2-deoxy-alpha-D-ribose 1-phosphate. Catalyzes the reversible phosphorolytic breakdown of the N-glycosidic bond in the beta-(deoxy)ribonucleoside molecules, with the formation of the corresponding free purine bases and pentose-1-phosphate. This chain is Purine nucleoside phosphorylase DeoD-type, found in Bacillus cereus (strain B4264).